A 32-amino-acid chain; its full sequence is Photosystem I reaction center subunit XII (32 aa).

The chain crosses the membrane as a helical span at residues valine 10–glycine 27.

This sequence belongs to the PsaM family.

It localises to the plastid. It is found in the chloroplast thylakoid membrane. This is Photosystem I reaction center subunit XII from Staurastrum punctulatum (Green alga).